The following is a 585-amino-acid chain: Protein NRT1/ PTR FAMILY 4.6 (585 aa).

12 helical membrane passes run 28-48 (GMLA…AYLA), 75-95 (FMGT…AFFS), 96-116 (TFQI…ILTI), 142-162 (AMLF…KGSL), 184-204 (FFNY…TFVV), 211-231 (GWEW…LIFL), 343-363 (IVLK…CLAQ), 391-411 (IFPV…IIPF), 428-448 (IGVG…VEIK), 465-485 (LPVT…ADLF), 508-528 (SLSW…VSIV), and 554-574 (FYWL…FWAM).

It belongs to the major facilitator superfamily. Proton-dependent oligopeptide transporter (POT/PTR) (TC 2.A.17) family. As to expression, expressed in root hairs and in epidermis of both root tips and mature regions of roots. Detected in shoots, stems, flowers, siliques and imbibed seeds. Expressed in vascular tissues in cotyledons, trus leaves, hypocotyls, roots and inflorescence stems.

It localises to the cell membrane. In terms of biological role, low-affinity proton-dependent nitrate transporter. Involved in constitutive nitrate uptake. Not involved in histidine or dipeptides transport. Involved in (+)-abscisic acid (ABA) transport, but not in gibberellin, indole-3-acetic acid or jasmonic acid import. Mediates cellular ABA uptake. Nitrate does not compete with abscisic acid as a substrate of NPF4.6. The protein is Protein NRT1/ PTR FAMILY 4.6 (NPF4.6) of Arabidopsis thaliana (Mouse-ear cress).